A 189-amino-acid polypeptide reads, in one-letter code: HGPRTase-like protein 2 (189 aa).

This sequence belongs to the purine/pyrimidine phosphoribosyltransferase family. Archaeal HPRT subfamily.

Its function is as follows. May catalyze a purine salvage reaction, the substrate is unknown. This is HGPRTase-like protein 2 from Halalkalicoccus jeotgali (strain DSM 18796 / CECT 7217 / JCM 14584 / KCTC 4019 / B3).